Consider the following 324-residue polypeptide: FCS-Like Zinc finger 11 (324 aa).

An FLZ-type zinc finger spans residues 266–309 (NFLGICNFCNKKLGGGDDIYMYREKSFCSEECRSEEMMIDEEDL).

This sequence belongs to the FLZ family. Interacts with KIN10 and KIN11 via its FLZ-type zinc finger domain. Forms heterodimer with FLZ2 in vitro.

Its subcellular location is the cytoplasm. The protein localises to the nucleus. In terms of biological role, may act as an adapter to facilitate the interaction of SnRK1 complex with effector proteins, conferring tissue- and stimulus-type specific differences in the SnRK1 regulation pathway. The chain is FCS-Like Zinc finger 11 from Arabidopsis thaliana (Mouse-ear cress).